The primary structure comprises 293 residues: Methylsterol monooxygenase 1 (293 aa).

The next 2 helical transmembrane spans lie at 55–75 (LIVH…FQFI) and 100–120 (KILF…YYFT). The Fatty acid hydroxylase domain maps to 144 to 274 (GCAVIEDTWH…FTWWDKLFGT (131 aa)). Positions 157–161 (HRLLH) match the Histidine box-1 motif. A Histidine box-2 motif is present at residues 170-174 (HKVHH). Residues 199-219 (FFIGIVLLCDHVILLWAWVTI) traverse the membrane as a helical segment. The short motif at 249-255 (HHDFHHM) is the Histidine box-3 element.

The protein belongs to the sterol desaturase family. The cofactor is Fe cation. In terms of processing, ubiquitinated by MARCHF6, leading to proteasomal degradation.

It is found in the endoplasmic reticulum membrane. The catalysed reaction is 4,4-dimethyl-5alpha-cholest-7-en-3beta-ol + 6 Fe(II)-[cytochrome b5] + 3 O2 + 5 H(+) = 4alpha-carboxy-4beta-methyl-5alpha-cholest-7-ene-3beta-ol + 6 Fe(III)-[cytochrome b5] + 4 H2O. It carries out the reaction 4,4-dimethyl-5alpha-cholesta-8,24-dien-3beta-ol + 6 Fe(II)-[cytochrome b5] + 3 O2 + 5 H(+) = 4beta-methylzymosterol-4alpha-carboxylate + 6 Fe(III)-[cytochrome b5] + 4 H2O. It catalyses the reaction 4alpha-methylzymosterol + 6 Fe(II)-[cytochrome b5] + 3 O2 + 5 H(+) = 4alpha-carboxyzymosterol + 6 Fe(III)-[cytochrome b5] + 4 H2O. The enzyme catalyses 4alpha-methyl-5alpha-cholest-7-en-3beta-ol + 6 Fe(II)-[cytochrome b5] + 3 O2 + 5 H(+) = 4alpha-carboxy-5alpha-cholest-7-en-3beta-ol + 6 Fe(III)-[cytochrome b5] + 4 H2O. The catalysed reaction is 4,4-dimethyl-5alpha-cholest-8-en-3beta-ol + 6 Fe(II)-[cytochrome b5] + 3 O2 + 5 H(+) = 4alpha-carboxy-4beta-methyl-5alpha-cholest-8-en-3beta-ol + 6 Fe(III)-[cytochrome b5] + 4 H2O. It carries out the reaction 4alpha-methyl-5alpha-cholest-8-en-3beta-ol + 6 Fe(II)-[cytochrome b5] + 3 O2 + 5 H(+) = 4alpha-carboxy-5alpha-cholest-8-ene-3beta-ol + 6 Fe(III)-[cytochrome b5] + 4 H2O. Its pathway is steroid biosynthesis; zymosterol biosynthesis; zymosterol from lanosterol: step 3/6. It participates in steroid biosynthesis; cholesterol biosynthesis. Its function is as follows. Catalyzes the three-step monooxygenation required for the demethylation of 4,4-dimethyl and 4alpha-methylsterols, which can be subsequently metabolized to cholesterol. This chain is Methylsterol monooxygenase 1 (Msmo1), found in Mus musculus (Mouse).